Here is a 769-residue protein sequence, read N- to C-terminus: MKGITFFTPFLSFLYLLCILFMTETEAGSRNGDGVYIVYMGSASSAANANRAQILINTMFKRRANDLLHTYKHGFSGFAARLTAEEAKVIAKKPGVVSVFPDPHFQLHTTHSWDFLKYQTSVKVDSGPPSSASDGSYDSIVGILDTGIWPESESFNDKDMGPIPSRWKGTCMEAKDFKSSNCNRKIIGARYYKNPDDDSEYYTTRDVIGHGSHVSSTIAGSAVENASYYGVASGTAKGGSQNARIAMYKVCNPGGCTGSSILAAFDDAIADGVDVLSLSLGAPAYARIDLNTDPIAIGAFHAVEQGILVICSAGNDGPDGGTVTNTAPWIMTVAANTIDRDFESDVVLGGNKVIKGEGIHFSNVSKSPVYPLIHGKSAKSADASEGSARACDSDSLDQEKVKGKIVLCENVGGSYYASSARDEVKSKGGTGCVFVDDRTRAVASAYGSFPTTVIDSKEAAEIFSYLNSTKDPVATILPTATVEKFTPAPAVAYFSSRGPSSLTRSILKPDITAPGVSILAAWTGNDSSISLEGKPASQYNVISGTSMAAPHVSAVASLIKSQHPTWGPSAIRSAIMTTATQTNNDKGLITTETGATATPYDSGAGELSSTASMQPGLVYETTETDYLNFLCYYGYNVTTIKAMSKAFPENFTCPADSNLDLISTINYPSIGISGFKGNGSKTVTRTVTNVGEDGEAVYTVSVETPPGFNIQVTPEKLQFTKDGEKLTYQVIVSATASLKQDVFGALTWSNAKYKVRSPIVISSESSRTN.

The N-terminal stretch at 1–27 (MKGITFFTPFLSFLYLLCILFMTETEA) is a signal peptide. An Inhibitor I9 domain is found at 35-108 (VYIVYMGSAS…VFPDPHFQLH (74 aa)). The Peptidase S8 domain maps to 112–613 (SWDFLKYQTS…AGELSSTASM (502 aa)). Residues Asp-145 and His-210 each act as charge relay system in the active site. One can recognise a PA domain in the interval 381–465 (ADASEGSARA…SKEAAEIFSY (85 aa)). Catalysis depends on Ser-546, which acts as the Charge relay system.

The protein belongs to the peptidase S8 family. In terms of tissue distribution, expressed in roots, guard cells and meristemoid and pavement cells.

The protein localises to the secreted. It localises to the cell wall. The catalysed reaction is Release of an N-terminal tripeptide from a polypeptide.. Mediates CO(2)-controlled stomatal development by cleaving peptide EPF2 (AC Q8LC53). Not active on peptides EPF1 (AC Q8S8I4) or stomagen (AC Q9SV72). This chain is CO(2)-response secreted protease, found in Arabidopsis thaliana (Mouse-ear cress).